We begin with the raw amino-acid sequence, 109 residues long: Nucleoid-associated protein AHA_2212 (109 aa).

Disordered regions lie at residues 1 to 23 (MFGK…RMQK) and 88 to 109 (NKSK…KMPF). Positions 11-23 (MKQAQQMQERMQK) are enriched in low complexity.

It belongs to the YbaB/EbfC family. As to quaternary structure, homodimer.

The protein resides in the cytoplasm. Its subcellular location is the nucleoid. Its function is as follows. Binds to DNA and alters its conformation. May be involved in regulation of gene expression, nucleoid organization and DNA protection. The chain is Nucleoid-associated protein AHA_2212 from Aeromonas hydrophila subsp. hydrophila (strain ATCC 7966 / DSM 30187 / BCRC 13018 / CCUG 14551 / JCM 1027 / KCTC 2358 / NCIMB 9240 / NCTC 8049).